Here is a 443-residue protein sequence, read N- to C-terminus: Methylenetetrahydrofolate--tRNA-(uracil-5-)-methyltransferase TrmFO (443 aa).

Residue 8–13 (GAGLAG) coordinates FAD.

It belongs to the MnmG family. TrmFO subfamily. The cofactor is FAD.

Its subcellular location is the cytoplasm. It catalyses the reaction uridine(54) in tRNA + (6R)-5,10-methylene-5,6,7,8-tetrahydrofolate + NADH + H(+) = 5-methyluridine(54) in tRNA + (6S)-5,6,7,8-tetrahydrofolate + NAD(+). It carries out the reaction uridine(54) in tRNA + (6R)-5,10-methylene-5,6,7,8-tetrahydrofolate + NADPH + H(+) = 5-methyluridine(54) in tRNA + (6S)-5,6,7,8-tetrahydrofolate + NADP(+). Functionally, catalyzes the folate-dependent formation of 5-methyl-uridine at position 54 (M-5-U54) in all tRNAs. The sequence is that of Methylenetetrahydrofolate--tRNA-(uracil-5-)-methyltransferase TrmFO from Thermus thermophilus (strain ATCC BAA-163 / DSM 7039 / HB27).